The following is a 198-amino-acid chain: MLLMMIDNYDSFTYNVVQYLGELGAEVKVIRNDEMTIAQIEALNPERIVVSPGPCTPSEAGVSIEAILHFAGKLPILGVCLGHQSIGQAFGGDVVRARQVMHGKTSPVHHRDLGVFTGLNNPLTVTRYHSLVVKRETLPDCLEVTAWTAHEDGSVDEIMGLRHKTLNIEGVQFHPESILTEQGHELFANFLKQTGGRR.

The 197-residue stretch at 2-198 (LLMMIDNYDS…NFLKQTGGRR (197 aa)) folds into the Glutamine amidotransferase type-1 domain. 53–55 (GPC) is a binding site for L-glutamine. The active-site Nucleophile; for GATase activity is the Cys-80. L-glutamine contacts are provided by residues Gln-84 and 130–131 (SL). Active-site for GATase activity residues include His-174 and Glu-176.

As to quaternary structure, heterotetramer consisting of two non-identical subunits: a beta subunit (TrpG) and a large alpha subunit (TrpE).

The catalysed reaction is chorismate + L-glutamine = anthranilate + pyruvate + L-glutamate + H(+). It functions in the pathway amino-acid biosynthesis; L-tryptophan biosynthesis; L-tryptophan from chorismate: step 1/5. Part of a heterotetrameric complex that catalyzes the two-step biosynthesis of anthranilate, an intermediate in the biosynthesis of L-tryptophan. In the first step, the glutamine-binding beta subunit (TrpG) of anthranilate synthase (AS) provides the glutamine amidotransferase activity which generates ammonia as a substrate that, along with chorismate, is used in the second step, catalyzed by the large alpha subunit of AS (TrpE) to produce anthranilate. In the absence of TrpG, TrpE can synthesize anthranilate directly from chorismate and high concentrations of ammonia. This chain is Anthranilate synthase component 2 (trpG), found in Pseudomonas putida (Arthrobacter siderocapsulatus).